The following is a 321-amino-acid chain: Tetraketide alpha-pyrone reductase 2 (321 aa).

The residue at position 2 (serine 2) is an N-acetylserine. NADP(+)-binding positions include 4–28 (YLVTGGTGFIASYIIKSLLELGHTV), lysine 40, and tyrosine 160.

Belongs to the NAD(P)-dependent epimerase/dehydratase family. Dihydroflavonol-4-reductase subfamily.

It localises to the cytoplasm. May be involved in the biosynthesis of hydroxylated tetraketide compounds that serve as sporopollenin precursors (the main constituents of exine). Acts on tetraketide alpha-pyrones and reduces the carbonyl function on the tetraketide alkyl chain to a secondary alcohol function. This Arabidopsis thaliana (Mouse-ear cress) protein is Tetraketide alpha-pyrone reductase 2 (TKPR2).